Reading from the N-terminus, the 121-residue chain is Large ribosomal subunit protein uL14c (121 aa).

This sequence belongs to the universal ribosomal protein uL14 family. As to quaternary structure, part of the 50S ribosomal subunit.

The protein resides in the plastid. It localises to the chloroplast. Functionally, binds to 23S rRNA. The protein is Large ribosomal subunit protein uL14c of Euglena gracilis.